The chain runs to 406 residues: Phloroisovalerophenone synthase (406 aa).

The active site involves Cys-171.

It belongs to the thiolase-like superfamily. Chalcone/stilbene synthases family.

It catalyses the reaction 3-methylbutanoyl-CoA + 3 malonyl-CoA + 3 H(+) = phlorisovalerophenone + 3 CO2 + 4 CoA. Functionally, produces 3-methyl-1-(2,4,6-trihydroxyphenyl)butan-1-one (phloroisovalerophenone). The chain is Phloroisovalerophenone synthase (VPS) from Psilotum nudum (Whisk fern).